Reading from the N-terminus, the 185-residue chain is Large ribosomal subunit protein uL5 (185 aa).

This sequence belongs to the universal ribosomal protein uL5 family. Part of the 50S ribosomal subunit; part of the 5S rRNA/L5/L18/L25 subcomplex. Contacts the 5S rRNA and the P site tRNA. Forms a bridge to the 30S subunit in the 70S ribosome.

In terms of biological role, this is one of the proteins that bind and probably mediate the attachment of the 5S RNA into the large ribosomal subunit, where it forms part of the central protuberance. In the 70S ribosome it contacts protein S13 of the 30S subunit (bridge B1b), connecting the 2 subunits; this bridge is implicated in subunit movement. Contacts the P site tRNA; the 5S rRNA and some of its associated proteins might help stabilize positioning of ribosome-bound tRNAs. The sequence is that of Large ribosomal subunit protein uL5 from Azorhizobium caulinodans (strain ATCC 43989 / DSM 5975 / JCM 20966 / LMG 6465 / NBRC 14845 / NCIMB 13405 / ORS 571).